We begin with the raw amino-acid sequence, 321 residues long: Transcription factor ATOH8 (321 aa).

Disordered stretches follow at residues 59 to 193 and 203 to 222; these read GLRD…SSYS and HQDS…AASS. The segment covering 70 to 85 has biased composition (pro residues); that stretch reads VPVPVPVPVPVAPAVP. Residues 93 to 109 show a composition bias toward basic and acidic residues; it reads AGERGGSRAPEVSDARK. Over residues 121–132 the composition is skewed to pro residues; the sequence is LPTPPPPPPPAP. Residues 133–143 show a composition bias toward low complexity; the sequence is QSQAPGGPEAQ. The segment covering 160-186 has biased composition (pro residues); sequence PARPAPSAPPAPPAPPESTVRPAPPTR. The tract at residues 230 to 243 is basic motif; degenerate; the sequence is TRRLLANARERTRV. Residues 230-282 enclose the bHLH domain; sequence TRRLLANARERTRVHTISAAFEALRKQVPCYSYGQKLSKLAILRIACNYILSL. The interval 244–282 is helix-loop-helix motif; the sequence is HTISAAFEALRKQVPCYSYGQKLSKLAILRIACNYILSL.

As to quaternary structure, efficient DNA binding requires dimerization with another bHLH protein. Interacts with NEUROG3 and NEUROD1. Interacts with ZFPM2; mediates indirect interaction with GATA4. Forms a heterodimer with TCF3; repress transcription of TCF3 and TCF3/NEUROG3 dimer-induced transactivation of E box-dependent promoters. Expressed in lung, liver, kidney, heart and pancreas. Expressed in endothel of umbilical vessels.

Its subcellular location is the nucleus. The protein localises to the nucleus speckle. The protein resides in the cytoplasm. Its function is as follows. Transcription factor that binds a palindromic (canonical) core consensus DNA sequence 5'-CANNTG- 3' known as an E-box element, possibly as a heterodimer with other bHLH proteins. Regulates endothelial cell proliferation, migration and tube-like structures formation. Modulates endothelial cell differentiation through NOS3. May be implicated in specification and differentiation of neuronal cell lineages in the brain. May participate in kidney development and may be involved in podocyte differentiation. During early embryonic development is involved in tissue-specific differentiation processes that are dependent on class II bHLH factors and namely modulates the differentiation program initiated by the pro-endocrine factor NEUROG3. During myogenesis, may play a role during the transition of myoblasts from the proliferative phase to the differentiation phase. Positively regulates HAMP transcription in two ways, firstly by acting directly on the HAMP promoter via E-boxes binding and indirectly through increased phosphorylation of SMAD protein complex. Repress NEUROG3-dependent gene activation in a gene-specific manner through at least two mechanisms; requires only either the sequestering of a general partner such as TCF3 through heterodimerization, either also requires binding of the bHLH domain to DNA via a basic motif. The polypeptide is Transcription factor ATOH8 (Homo sapiens (Human)).